The chain runs to 352 residues: Uroporphyrinogen decarboxylase (352 aa).

Residues 26–30 (RQAGR), phenylalanine 45, aspartate 76, tyrosine 153, serine 208, and histidine 323 each bind substrate.

This sequence belongs to the uroporphyrinogen decarboxylase family. In terms of assembly, homodimer.

The protein localises to the cytoplasm. The enzyme catalyses uroporphyrinogen III + 4 H(+) = coproporphyrinogen III + 4 CO2. It functions in the pathway porphyrin-containing compound metabolism; protoporphyrin-IX biosynthesis; coproporphyrinogen-III from 5-aminolevulinate: step 4/4. In terms of biological role, catalyzes the decarboxylation of four acetate groups of uroporphyrinogen-III to yield coproporphyrinogen-III. This is Uroporphyrinogen decarboxylase from Prochlorococcus marinus (strain MIT 9313).